Consider the following 440-residue polypeptide: tRNA(Ile)-lysidine synthase (440 aa).

Serine 31–serine 36 serves as a coordination point for ATP.

The protein belongs to the tRNA(Ile)-lysidine synthase family.

Its subcellular location is the cytoplasm. The enzyme catalyses cytidine(34) in tRNA(Ile2) + L-lysine + ATP = lysidine(34) in tRNA(Ile2) + AMP + diphosphate + H(+). Functionally, ligates lysine onto the cytidine present at position 34 of the AUA codon-specific tRNA(Ile) that contains the anticodon CAU, in an ATP-dependent manner. Cytidine is converted to lysidine, thus changing the amino acid specificity of the tRNA from methionine to isoleucine. The chain is tRNA(Ile)-lysidine synthase from Borrelia garinii subsp. bavariensis (strain ATCC BAA-2496 / DSM 23469 / PBi) (Borreliella bavariensis).